A 455-amino-acid polypeptide reads, in one-letter code: Bifunctional protein GlmU (455 aa).

The tract at residues 1–226 is pyrophosphorylase; the sequence is MSLDIVILAA…AMEVQGANDR (226 aa). Residues 8 to 11, Lys22, Gln73, 78 to 79, 99 to 101, Gly136, Glu151, Asn166, and Asn224 each bind UDP-N-acetyl-alpha-D-glucosamine; these read LAAG, GT, and YGD. Asp101 is a binding site for Mg(2+). Residue Asn224 participates in Mg(2+) binding. A linker region spans residues 227-247; that stretch reads KQLSELERHYQLREARRLMAG. Positions 248 to 455 are N-acetyltransferase; that stretch reads GVTLRDPARF…WKRPVKIRKD (208 aa). UDP-N-acetyl-alpha-D-glucosamine is bound by residues Arg330 and Lys348. His360 functions as the Proton acceptor in the catalytic mechanism. 2 residues coordinate UDP-N-acetyl-alpha-D-glucosamine: Tyr363 and Asn374. Residues Ala377, 383–384, Ser402, Ala420, and Arg437 contribute to the acetyl-CoA site; that span reads NY.

The protein in the N-terminal section; belongs to the N-acetylglucosamine-1-phosphate uridyltransferase family. This sequence in the C-terminal section; belongs to the transferase hexapeptide repeat family. In terms of assembly, homotrimer. Mg(2+) is required as a cofactor.

It localises to the cytoplasm. It catalyses the reaction alpha-D-glucosamine 1-phosphate + acetyl-CoA = N-acetyl-alpha-D-glucosamine 1-phosphate + CoA + H(+). The catalysed reaction is N-acetyl-alpha-D-glucosamine 1-phosphate + UTP + H(+) = UDP-N-acetyl-alpha-D-glucosamine + diphosphate. Its pathway is nucleotide-sugar biosynthesis; UDP-N-acetyl-alpha-D-glucosamine biosynthesis; N-acetyl-alpha-D-glucosamine 1-phosphate from alpha-D-glucosamine 6-phosphate (route II): step 2/2. It functions in the pathway nucleotide-sugar biosynthesis; UDP-N-acetyl-alpha-D-glucosamine biosynthesis; UDP-N-acetyl-alpha-D-glucosamine from N-acetyl-alpha-D-glucosamine 1-phosphate: step 1/1. The protein operates within bacterial outer membrane biogenesis; LPS lipid A biosynthesis. Its function is as follows. Catalyzes the last two sequential reactions in the de novo biosynthetic pathway for UDP-N-acetylglucosamine (UDP-GlcNAc). The C-terminal domain catalyzes the transfer of acetyl group from acetyl coenzyme A to glucosamine-1-phosphate (GlcN-1-P) to produce N-acetylglucosamine-1-phosphate (GlcNAc-1-P), which is converted into UDP-GlcNAc by the transfer of uridine 5-monophosphate (from uridine 5-triphosphate), a reaction catalyzed by the N-terminal domain. This chain is Bifunctional protein GlmU, found in Pseudomonas savastanoi pv. phaseolicola (strain 1448A / Race 6) (Pseudomonas syringae pv. phaseolicola (strain 1448A / Race 6)).